The primary structure comprises 293 residues: 4-diphosphocytidyl-2-C-methyl-D-erythritol kinase (293 aa).

Lys-16 is a catalytic residue. 99 to 109 (PMGAGLGGGSS) contributes to the ATP binding site. Asp-141 is a catalytic residue.

The protein belongs to the GHMP kinase family. IspE subfamily.

It catalyses the reaction 4-CDP-2-C-methyl-D-erythritol + ATP = 4-CDP-2-C-methyl-D-erythritol 2-phosphate + ADP + H(+). The protein operates within isoprenoid biosynthesis; isopentenyl diphosphate biosynthesis via DXP pathway; isopentenyl diphosphate from 1-deoxy-D-xylulose 5-phosphate: step 3/6. Catalyzes the phosphorylation of the position 2 hydroxy group of 4-diphosphocytidyl-2C-methyl-D-erythritol. The protein is 4-diphosphocytidyl-2-C-methyl-D-erythritol kinase of Paraburkholderia xenovorans (strain LB400).